The following is a 295-amino-acid chain: MSPSRPGFSCSWLPYLLVLPQLAITAIFFLWPAGEALWYSVQTLDPFGLSSEFVGLSNFIQLFQDEYYLASFYTTLIFSALVAGIGLIVSLFLAAMVNYVLRGSRLYQTLLILPYAVAPAVAAVLWIFLFDPGLGLITHALAKLGYSWNHAQNSGQAMFLVVLASVWKQISYNFLFFLAALQSIPKSLVEAAAIDGAGPVRRFFNLVLPLISPVSFFLLVVNLVYAFFDTFPVIDAATGGGPVQATTTLIYKIYREGFAGLDLSSSAAQSVILMLLVIGLTVIQFRFVERKVRYQ.

The Cytoplasmic portion of the chain corresponds to 1–11 (MSPSRPGFSCS). The chain crosses the membrane as a helical span at residues 12–32 (WLPYLLVLPQLAITAIFFLWP). Residues 33-80 (AGEALWYSVQTLDPFGLSSEFVGLSNFIQLFQDEYYLASFYTTLIFSA) are Periplasmic-facing. The 213-residue stretch at 72-284 (FYTTLIFSAL…LLVIGLTVIQ (213 aa)) folds into the ABC transmembrane type-1 domain. Residues 81–101 (LVAGIGLIVSLFLAAMVNYVL) form a helical membrane-spanning segment. Residues 102-109 (RGSRLYQT) are Cytoplasmic-facing. Residues 110–130 (LLILPYAVAPAVAAVLWIFLF) form a helical membrane-spanning segment. The Periplasmic segment spans residues 131 to 157 (DPGLGLITHALAKLGYSWNHAQNSGQA). Residues 158 to 178 (MFLVVLASVWKQISYNFLFFL) form a helical membrane-spanning segment. The Cytoplasmic portion of the chain corresponds to 179-207 (AALQSIPKSLVEAAAIDGAGPVRRFFNLV). The chain crosses the membrane as a helical span at residues 208–228 (LPLISPVSFFLLVVNLVYAFF). The Periplasmic segment spans residues 229 to 262 (DTFPVIDAATGGGPVQATTTLIYKIYREGFAGLD). A helical membrane pass occupies residues 263 to 283 (LSSSAAQSVILMLLVIGLTVI). The Cytoplasmic portion of the chain corresponds to 284–295 (QFRFVERKVRYQ).

Belongs to the binding-protein-dependent transport system permease family. UgpAE subfamily. The complex is composed of two ATP-binding proteins (UgpC), two transmembrane proteins (UgpA and UgpE) and a solute-binding protein (UgpB).

The protein localises to the cell inner membrane. Functionally, part of the ABC transporter complex UgpBAEC involved in sn-glycerol-3-phosphate (G3P) import. Probably responsible for the translocation of the substrate across the membrane. This chain is sn-glycerol-3-phosphate transport system permease protein UgpA (ugpA), found in Yersinia pestis bv. Antiqua (strain Antiqua).